The sequence spans 458 residues: 5'-adenylylsulfate reductase 3, chloroplastic (458 aa).

The segment at 1–24 (MALAINVSSSSSSAISSSSFPSSD) is disordered. The transit peptide at 1 to 69 (MALAINVSSS…VQSITKESIV (69 aa)) directs the protein to the chloroplast. The segment covering 8–23 (SSSSSSAISSSSFPSS) has biased composition (low complexity). Positions 70–319 (ASEVTEKLDV…KAKECGLHKG (250 aa)) are reductase domain. Residues 337–458 (ASVADIFNSE…SLTSFLNLVR (122 aa)) form the Thioredoxin domain. Residues cysteine 378 and cysteine 381 each act as nucleophile in the active site. The cysteines at positions 378 and 381 are disulfide-linked.

This sequence belongs to the APS reductase family. It depends on [4Fe-4S] cluster as a cofactor. In terms of tissue distribution, leaves, roots and stem.

It is found in the plastid. The protein resides in the chloroplast. It catalyses the reaction glutathione disulfide + sulfite + AMP + 2 H(+) = adenosine 5'-phosphosulfate + 2 glutathione. Stimulated by sodium sulfate &gt; ammonium sulfate. Functionally, reduces sulfate for Cys biosynthesis. Substrate preference is adenosine-5'-phosphosulfate (APS) &gt;&gt; 3'-phosphoadenosine-5'-phosphosulfate (PAPS). Uses glutathione or DTT as source of protons. This is 5'-adenylylsulfate reductase 3, chloroplastic (APR3) from Arabidopsis thaliana (Mouse-ear cress).